We begin with the raw amino-acid sequence, 251 residues long: 1-(5-phosphoribosyl)-5-[(5-phosphoribosylamino)methylideneamino] imidazole-4-carboxamide isomerase (251 aa).

Asp-8 acts as the Proton acceptor in catalysis. The active-site Proton donor is the Asp-131.

The protein belongs to the HisA/HisF family.

Its subcellular location is the cytoplasm. The enzyme catalyses 1-(5-phospho-beta-D-ribosyl)-5-[(5-phospho-beta-D-ribosylamino)methylideneamino]imidazole-4-carboxamide = 5-[(5-phospho-1-deoxy-D-ribulos-1-ylimino)methylamino]-1-(5-phospho-beta-D-ribosyl)imidazole-4-carboxamide. Its pathway is amino-acid biosynthesis; L-histidine biosynthesis; L-histidine from 5-phospho-alpha-D-ribose 1-diphosphate: step 4/9. The polypeptide is 1-(5-phosphoribosyl)-5-[(5-phosphoribosylamino)methylideneamino] imidazole-4-carboxamide isomerase (Thiobacillus denitrificans (strain ATCC 25259 / T1)).